A 450-amino-acid chain; its full sequence is MKSITQLENKKVLVLGLAKSGEAAARLLAKLGAIVTVNDGKAFEENPSAQSLLEEGIKVVCGGHPLELLDENFELMVKNPGIRYDNPMVARALEKEIPVWTEVELAYLVSEAPIIGITGSNGKTTTTTMIADVLNHGGKSGVLSGNIGFPASEVAQSVTNQDTLVMELSSFQLMGIESFHPHIAVITNLMPTHIDYHGSFEEYVAAKWNIQNEMTSDDFIILNFNQDLAKELATQTNAQVVPFSTVEKVDGAYLENGGLYFKGELLMHADELGVPGSHNVENALATIAVAKLSGVSNQAIKETLSSFGGVKHRLQFVDTIDDVKFYNDSKSTNILATQKALSGFDNSKVILIAGGLDRGNEFDELIPDITGLKKMVILGESAPRVKRAADKAGVTYLDAKDVADATRIAFEQASAGDVVLLSPANASWDMYKNFEVRGDEFITTVERLKG.

Residue 119 to 125 (GSNGKTT) participates in ATP binding.

Belongs to the MurCDEF family.

The protein resides in the cytoplasm. The catalysed reaction is UDP-N-acetyl-alpha-D-muramoyl-L-alanine + D-glutamate + ATP = UDP-N-acetyl-alpha-D-muramoyl-L-alanyl-D-glutamate + ADP + phosphate + H(+). Its pathway is cell wall biogenesis; peptidoglycan biosynthesis. In terms of biological role, cell wall formation. Catalyzes the addition of glutamate to the nucleotide precursor UDP-N-acetylmuramoyl-L-alanine (UMA). In Streptococcus thermophilus (strain CNRZ 1066), this protein is UDP-N-acetylmuramoylalanine--D-glutamate ligase.